A 391-amino-acid polypeptide reads, in one-letter code: Phosphoglycerate kinase (391 aa).

Residues 16 to 18, arginine 31, 54 to 57, arginine 108, and arginine 141 contribute to the substrate site; these read DLN and HLGR. Residues lysine 192, glutamate 314, and 340-343 contribute to the ATP site; that span reads GGDT.

The protein belongs to the phosphoglycerate kinase family. Monomer.

The protein resides in the cytoplasm. The catalysed reaction is (2R)-3-phosphoglycerate + ATP = (2R)-3-phospho-glyceroyl phosphate + ADP. It participates in carbohydrate degradation; glycolysis; pyruvate from D-glyceraldehyde 3-phosphate: step 2/5. This Coxiella burnetii (strain RSA 493 / Nine Mile phase I) protein is Phosphoglycerate kinase.